Reading from the N-terminus, the 192-residue chain is Xanthine phosphoribosyltransferase (192 aa).

2 residues coordinate xanthine: Leu20 and Asn27. 5-phospho-alpha-D-ribose 1-diphosphate is bound at residue 128 to 132 (ANGDA). Residue Lys156 coordinates xanthine.

The protein belongs to the purine/pyrimidine phosphoribosyltransferase family. Xpt subfamily. Homodimer.

The protein resides in the cytoplasm. It carries out the reaction XMP + diphosphate = xanthine + 5-phospho-alpha-D-ribose 1-diphosphate. Its pathway is purine metabolism; XMP biosynthesis via salvage pathway; XMP from xanthine: step 1/1. Its function is as follows. Converts the preformed base xanthine, a product of nucleic acid breakdown, to xanthosine 5'-monophosphate (XMP), so it can be reused for RNA or DNA synthesis. This chain is Xanthine phosphoribosyltransferase, found in Staphylococcus epidermidis (strain ATCC 35984 / DSM 28319 / BCRC 17069 / CCUG 31568 / BM 3577 / RP62A).